The following is a 317-amino-acid chain: Acetyl-coenzyme A carboxylase carboxyl transferase subunit alpha (317 aa).

One can recognise a CoA carboxyltransferase C-terminal domain in the interval 39-293 (RLESKAAAAL…GDALAEALTG (255 aa)).

This sequence belongs to the AccA family. As to quaternary structure, acetyl-CoA carboxylase is a heterohexamer composed of biotin carboxyl carrier protein (AccB), biotin carboxylase (AccC) and two subunits each of ACCase subunit alpha (AccA) and ACCase subunit beta (AccD).

It localises to the cytoplasm. The catalysed reaction is N(6)-carboxybiotinyl-L-lysyl-[protein] + acetyl-CoA = N(6)-biotinyl-L-lysyl-[protein] + malonyl-CoA. Its pathway is lipid metabolism; malonyl-CoA biosynthesis; malonyl-CoA from acetyl-CoA: step 1/1. Its function is as follows. Component of the acetyl coenzyme A carboxylase (ACC) complex. First, biotin carboxylase catalyzes the carboxylation of biotin on its carrier protein (BCCP) and then the CO(2) group is transferred by the carboxyltransferase to acetyl-CoA to form malonyl-CoA. This is Acetyl-coenzyme A carboxylase carboxyl transferase subunit alpha from Methylobacterium nodulans (strain LMG 21967 / CNCM I-2342 / ORS 2060).